Here is a 92-residue protein sequence, read N- to C-terminus: Exodeoxyribonuclease 7 small subunit (92 aa).

The disordered stretch occupies residues 1–22 (MPKKNAISESTNSTPETAPAMT). Over residues 7–16 (ISESTNSTPE) the composition is skewed to polar residues.

It belongs to the XseB family. As to quaternary structure, heterooligomer composed of large and small subunits.

The protein resides in the cytoplasm. It carries out the reaction Exonucleolytic cleavage in either 5'- to 3'- or 3'- to 5'-direction to yield nucleoside 5'-phosphates.. In terms of biological role, bidirectionally degrades single-stranded DNA into large acid-insoluble oligonucleotides, which are then degraded further into small acid-soluble oligonucleotides. This Photorhabdus laumondii subsp. laumondii (strain DSM 15139 / CIP 105565 / TT01) (Photorhabdus luminescens subsp. laumondii) protein is Exodeoxyribonuclease 7 small subunit.